Reading from the N-terminus, the 79-residue chain is Small ribosomal subunit protein bS18 (79 aa).

Belongs to the bacterial ribosomal protein bS18 family. As to quaternary structure, part of the 30S ribosomal subunit. Forms a tight heterodimer with protein bS6.

In terms of biological role, binds as a heterodimer with protein bS6 to the central domain of the 16S rRNA, where it helps stabilize the platform of the 30S subunit. The protein is Small ribosomal subunit protein bS18 of Streptococcus pneumoniae (strain Hungary19A-6).